Consider the following 144-residue polypeptide: Effector EagT6 (144 aa).

Homodimer. Two dimers interact with Tse6; this interaction is crucial for Tse6 loading onto VgrG1a.

Its function is as follows. Plays an essential role in toxin Tse6 delivery to target cells and specifically in the loading of Tse6 onto VgrG1a. This chain is Effector EagT6, found in Pseudomonas aeruginosa (strain ATCC 15692 / DSM 22644 / CIP 104116 / JCM 14847 / LMG 12228 / 1C / PRS 101 / PAO1).